We begin with the raw amino-acid sequence, 1024 residues long: E3 ISG15--protein ligase HERC5 (1024 aa).

The segment covering 1–13 (MERRSRRKSRRNG) has biased composition (basic residues). A disordered region spans residues 1–28 (MERRSRRKSRRNGRSTAGKAAATQPAKS). RCC1 repeat units lie at residues 96-155 (NMKI…ALSK), 156-208 (GGEL…ALSM), 209-260 (SGNI…LLTQ), 262-312 (GLLF…AYVS), and 314-364 (LGKV…LIMI). One can recognise an HECT domain in the interval 702–1024 (ENEDLRKELW…EAINNNRGFG (323 aa)). The active-site Glycyl thioester intermediate is Cys994.

In terms of assembly, (Microbial infection) Interacts with human cytomegalovirus protein UL26; this interaction inhibits global protein ISGylation. (Microbial infection) Interacts with Kaposi's sarcoma-associated herpesvirus protein v-IRF1; this interaction inhibits global protein ISGylation. As to quaternary structure, binds to CCNA1, CCNB1, CCND1 and CCNE1. Interacts with UBE2L6. Interacts with IRF3, this interaction is marginal in resting cells but enhanced upon viral infection. Interacts with influenza A virus NS1. In terms of processing, ISGylated. As to expression, expressed in testis and to a lesser degree in brain, ovary and placenta. Found in most tissues at low levels.

Its subcellular location is the cytoplasm. The protein localises to the perinuclear region. Major E3 ligase for ISG15 conjugation. Acts as a positive regulator of innate antiviral response in cells induced by interferon. Functions as part of the ISGylation machinery that recognizes target proteins in a broad and relatively non-specific manner. Catalyzes ISGylation of IRF3 which results in sustained activation, it attenuates IRF3-PIN1 interaction, which antagonizes IRF3 ubiquitination and degradation, and boosts the antiviral response. Mediates ISGylation of the phosphatase PTEN leading to its degradation, thus alleviating its suppression of the PI3K-AKT signaling pathway and promoting the production of cytokines that facilitate bacterial clearance. Interferes with the function of key viral structural proteins such as ebolavirus structural protein VP40 or HIV-1 protein GAG. Catalyzes ISGylation of influenza A viral NS1 which attenuates virulence; ISGylated NS1 fails to form homodimers and thus to interact with its RNA targets. Catalyzes ISGylation of papillomavirus type 16 L1 protein which results in dominant-negative effect on virus infectivity. Physically associated with polyribosomes, broadly modifies newly synthesized proteins in a cotranslational manner. In an interferon-stimulated cell, newly translated viral proteins are primary targets of ISG15. Promotes parkin/PRKN ubiquitin E3 ligase activity by suppressing the intramolecular interaction that maintains its autoinhibited conformation. In terms of biological role, (Microbial infection) Functions as an E3 ligase for ISGylation of hepatitis B virus protein X leading to enhanced viral replication due to increased interferon resistance. The sequence is that of E3 ISG15--protein ligase HERC5 (HERC5) from Homo sapiens (Human).